The chain runs to 1128 residues: MDGRTPRPQDAPARRKPKAKAPLPPAETKYTDVSSAADSVESTAFIMEQKENMIDKDVELSVVLPGDIIKSTTVHGSKPMMDLLIFLCAQYHLNPSSYTIDLLSAEQNHIKFKPNTPIGMLEVEKVILKPKMLDKKKPTPIIPEKTVRVVINFKKTQKTIVRVSPHASLQELAPIICSKCEFDPLHTLLLKDYQSQEPLDLTKSLNDLGLRELYAMDVNRESCQISQNLDIMKEKENKGFFSFFQRSKKKRDQTASAPATPLVNKHRPTFTRSNTISKPYISNTLPSDAPKKRRAPLPPMPASQSVPQDLAHIQERPASCIVKSMSVDETDKSPCEAGRVRAGSLQLSSMSAGNSSLRRTKRKAPSPPSKIPPHQSDENSRVTALQPVDGVPPDSASEANSPEELSSPAGISSDYSLEEIDEKEELSEVPKVEAENISPKSQDIPFVSTDIINTLKNDPDSALGNGSGEFSQNSMEEKQETKSTDGQEPHSVVYDTSNGKKVVDSIRNLKSLGPNQENVVQNEIIVYPENTEDNMKNGVKKTEINVEGVAKNNNIDMEVERPSNSEAHETDTAISYKENHLAASSVPDQKLNQPSAEKTKDAAIQTTPSCNSFDGKHQDHNLSDSKVEECVQTSNNNISTQHSCLSSQDSVNTSREFRSQGTLIIHSEDPLTVKDPICAHGNDDLLPPVDRIDKNSTASYLKNYPLYRQDYNPKPKPSNEITREYIPKIGMTTYKIVPPKSLEISKDWQSETIEYKDDQDMHALGKKHTHENVKETAIQTEDSAISESPEEPLPNLKPKPNLRTEHQVPSSVSSPDDAMVSPLKPAPKMTRDTGTAPFAPNLEEINNILESKFKSRASNAQAKPSSFFLQMQKRVSGHYVTSAAAKSVHAAPNPAPKELTNKEAERDMLPSPEQTLSPLSKMPHSVPQPLVEKTDDDVIGQAPAEASPPPIAPKPVTIPASQVSTQNLKTLKTFGAPRPYSSSGPSPFALAVVKRSQSFSKERTESPSASALVQPPANTEEGKTHSVNKFVDIPQLGVSDKENNSAHNEQNSQIPTPTDGPSFTVMRQSSLTFQSSDPEQMRQSLLTAIRSGEAAAKLKRVTIPSNTISVNGRSRLSHSMSPDAQDGH.

Residues 1–35 (MDGRTPRPQDAPARRKPKAKAPLPPAETKYTDVSS) are disordered. T139 is subject to Phosphothreonine. S204, S222, and S256 each carry phosphoserine. Disordered regions lie at residues 249 to 309 (KKRD…VPQD), 325 to 441 (MSVD…SPKS), and 454 to 499 (TLKN…TSNG). At T260 the chain carries Phosphothreonine. The segment covering 270-286 (FTRSNTISKPYISNTLP) has biased composition (polar residues). S273 carries the post-translational modification Phosphoserine. The residue at position 284 (T284) is a Phosphothreonine. The KKRRAP 1 signature appears at 291-296 (KKRRAP). Phosphoserine is present on residues S326, S333, S344, and S356. Polar residues predominate over residues 345–357 (LQLSSMSAGNSSL). Positions 360–365 (TKRKAP) match the KKRRAP 2 motif. Residues 397–415 (SEANSPEELSSPAGISSDY) show a composition bias toward polar residues. The span at 416–425 (SLEEIDEKEE) shows a compositional bias: acidic residues. 5 positions are modified to phosphoserine: S438, S441, S461, S471, and S474. The segment covering 475 to 488 (MEEKQETKSTDGQE) has biased composition (basic and acidic residues). 6 positions are modified to phosphoserine: S563, S584, S786, S813, S814, and S821. Disordered stretches follow at residues 780–840 (TEDS…PFAP), 882–964 (SAAA…SQVS), 995–1081 (RSQS…PEQM), and 1103–1128 (IPSNTISVNGRSRLSHSMSPDAQDGH). Residues 899–908 (LTNKEAERDM) show a composition bias toward basic and acidic residues. A phosphoserine mark is found at S911, S917, S947, S1069, and S1070. 2 stretches are compositionally biased toward polar residues: residues 1045 to 1081 (SAHNEQNSQIPTPTDGPSFTVMRQSSLTFQSSDPEQM) and 1103 to 1122 (IPSNTISVNGRSRLSHSMSP). One can recognise a WH2 domain in the interval 1081–1101 (MRQSLLTAIRSGEAAAKLKRV). S1121 is subject to Phosphoserine.

This is Cordon-bleu protein-like 1 from Homo sapiens (Human).